Reading from the N-terminus, the 258-residue chain is Development-specific 25 kDa protein (258 aa).

10–34 (VYVGGFSGFGYQVCQMMMKKPMKHL) provides a ligand contact to NAD(+). S138 lines the substrate pocket. Catalysis depends on Y151, which acts as the Proton acceptor.

It belongs to the short-chain dehydrogenases/reductases (SDR) family.

This Sarcophaga peregrina (Flesh fly) protein is Development-specific 25 kDa protein.